The chain runs to 198 residues: DNA polymerase zeta subunit 2 (198 aa).

The region spanning 4–196 is the HORMA domain; the sequence is EIKADIIVEA…DLGLKMDVLI (193 aa).

This sequence belongs to the MAD2 family. In terms of assembly, accessory subunit of the zeta DNA polymerase complex, which consists of the catalytic component PolZ1/DNApol-zeta and PolZ2/Rev7. Interacts with the apurinic/apyrimidinic (AP) endonuclease Rrp1 (via the N-terminus).

In terms of biological role, as the accessory component of the DNA polymerase zeta complex, involved in translesion DNA synthesis (TLS) and various DNA repair mechanisms. Promotes the apurinic/apyrimidinic (AP) endonuclease activity of Rrp1 and is therefore likely to be involved in the base excision repair (BER) pathway responsible for repair of DNA lesions. It does not appear to influence the synthesis activity of the catalytic component Dmpol-zeta. In Drosophila melanogaster (Fruit fly), this protein is DNA polymerase zeta subunit 2.